The sequence spans 335 residues: Tryptophan--tRNA ligase (335 aa).

Residues 19 to 21 (QPS) and 28 to 29 (GN) contribute to the ATP site. The short motif at 20–29 (PSSGMLHLGN) is the 'HIGH' region element. D143 serves as a coordination point for L-tryptophan. ATP is bound by residues 155-157 (GAD), I192, and 201-205 (KMSKS). Positions 201–205 (KMSKS) match the 'KMSKS' region motif.

It belongs to the class-I aminoacyl-tRNA synthetase family. Homodimer.

It is found in the cytoplasm. It carries out the reaction tRNA(Trp) + L-tryptophan + ATP = L-tryptophyl-tRNA(Trp) + AMP + diphosphate + H(+). In terms of biological role, catalyzes the attachment of tryptophan to tRNA(Trp). The polypeptide is Tryptophan--tRNA ligase (Tropheryma whipplei (strain Twist) (Whipple's bacillus)).